The sequence spans 122 residues: Small ribosomal subunit protein uS13 (122 aa).

The tract at residues 93–122 (RRSLPVRGQRTHTNARTRKGPAKPIAGKKK) is disordered.

The protein belongs to the universal ribosomal protein uS13 family. Part of the 30S ribosomal subunit. Forms a loose heterodimer with protein S19. Forms two bridges to the 50S subunit in the 70S ribosome.

Functionally, located at the top of the head of the 30S subunit, it contacts several helices of the 16S rRNA. In the 70S ribosome it contacts the 23S rRNA (bridge B1a) and protein L5 of the 50S subunit (bridge B1b), connecting the 2 subunits; these bridges are implicated in subunit movement. Contacts the tRNAs in the A and P-sites. The chain is Small ribosomal subunit protein uS13 from Chelativorans sp. (strain BNC1).